Here is a 605-residue protein sequence, read N- to C-terminus: DNA primase (605 aa).

A CHC2-type zinc finger spans residues cysteine 38 to cysteine 62. The Toprim domain maps to aspartate 260–glycine 341. Residues glutamate 266, aspartate 310, and aspartate 312 each contribute to the Mg(2+) site.

The protein belongs to the DnaG primase family. Monomer. Interacts with DnaB. Zn(2+) serves as cofactor. Requires Mg(2+) as cofactor.

It catalyses the reaction ssDNA + n NTP = ssDNA/pppN(pN)n-1 hybrid + (n-1) diphosphate.. Functionally, RNA polymerase that catalyzes the synthesis of short RNA molecules used as primers for DNA polymerase during DNA replication. This is DNA primase from Staphylococcus aureus (strain Mu50 / ATCC 700699).